We begin with the raw amino-acid sequence, 231 residues long: Ribosome maturation factor RimM (231 aa).

Residues 1–29 (MSERDSGSSGRAKAKRQPGAKAPFGPFVR) are disordered. Positions 150 to 231 (TDEYYWVDLV…KIIVDWEADY (82 aa)) constitute a PRC barrel domain.

Belongs to the RimM family. As to quaternary structure, binds ribosomal protein uS19.

The protein localises to the cytoplasm. An accessory protein needed during the final step in the assembly of 30S ribosomal subunit, possibly for assembly of the head region. Essential for efficient processing of 16S rRNA. May be needed both before and after RbfA during the maturation of 16S rRNA. It has affinity for free ribosomal 30S subunits but not for 70S ribosomes. The protein is Ribosome maturation factor RimM of Paraburkholderia phymatum (strain DSM 17167 / CIP 108236 / LMG 21445 / STM815) (Burkholderia phymatum).